A 416-amino-acid chain; its full sequence is 1-deoxy-D-xylulose 5-phosphate reductoisomerase (416 aa).

Thr10, Gly11, Ser12, Ile13, Gly36, Arg37, Asn38, and Asn130 together coordinate NADPH. Lys131 is a 1-deoxy-D-xylulose 5-phosphate binding site. Residue Glu132 coordinates NADPH. Residue Asp156 coordinates Mn(2+). The 1-deoxy-D-xylulose 5-phosphate site is built by Ser157, Glu158, Ser194, and His217. A Mn(2+)-binding site is contributed by Glu158. An NADPH-binding site is contributed by Gly223. The 1-deoxy-D-xylulose 5-phosphate site is built by Ser230, Asn235, Lys236, and Glu239. Position 239 (Glu239) interacts with Mn(2+).

It belongs to the DXR family. Mg(2+) is required as a cofactor. Requires Mn(2+) as cofactor.

It catalyses the reaction 2-C-methyl-D-erythritol 4-phosphate + NADP(+) = 1-deoxy-D-xylulose 5-phosphate + NADPH + H(+). Its pathway is isoprenoid biosynthesis; isopentenyl diphosphate biosynthesis via DXP pathway; isopentenyl diphosphate from 1-deoxy-D-xylulose 5-phosphate: step 1/6. Catalyzes the NADPH-dependent rearrangement and reduction of 1-deoxy-D-xylulose-5-phosphate (DXP) to 2-C-methyl-D-erythritol 4-phosphate (MEP). The sequence is that of 1-deoxy-D-xylulose 5-phosphate reductoisomerase from Synechococcus sp. (strain CC9311).